We begin with the raw amino-acid sequence, 263 residues long: Probable septum site-determining protein MinC (263 aa).

The segment at 107–159 (LPPSGARERPLDIKDSAPRKPAEEPSPSAGEARPEPAKAEEKPAEPVSRPTKV) is disordered. Composition is skewed to basic and acidic residues over residues 112–129 (ARER…KPAE) and 138–150 (ARPE…EKPA).

The protein belongs to the MinC family. In terms of assembly, interacts with MinD and FtsZ.

Its function is as follows. Cell division inhibitor that blocks the formation of polar Z ring septums. Rapidly oscillates between the poles of the cell to destabilize FtsZ filaments that have formed before they mature into polar Z rings. Prevents FtsZ polymerization. The polypeptide is Probable septum site-determining protein MinC (Pseudomonas aeruginosa (strain LESB58)).